The primary structure comprises 466 residues: 3-isopropylmalate dehydratase large subunit (466 aa).

C347, C407, and C410 together coordinate [4Fe-4S] cluster.

It belongs to the aconitase/IPM isomerase family. LeuC type 1 subfamily. In terms of assembly, heterodimer of LeuC and LeuD. [4Fe-4S] cluster is required as a cofactor.

It carries out the reaction (2R,3S)-3-isopropylmalate = (2S)-2-isopropylmalate. The protein operates within amino-acid biosynthesis; L-leucine biosynthesis; L-leucine from 3-methyl-2-oxobutanoate: step 2/4. Catalyzes the isomerization between 2-isopropylmalate and 3-isopropylmalate, via the formation of 2-isopropylmaleate. This chain is 3-isopropylmalate dehydratase large subunit, found in Vibrio vulnificus (strain YJ016).